The chain runs to 354 residues: Uroporphyrinogen decarboxylase (354 aa).

Substrate contacts are provided by residues 27–31, Phe46, Asp77, Tyr154, Ser209, and His327; that span reads RQAGR.

The protein belongs to the uroporphyrinogen decarboxylase family. In terms of assembly, homodimer.

The protein localises to the cytoplasm. The enzyme catalyses uroporphyrinogen III + 4 H(+) = coproporphyrinogen III + 4 CO2. The protein operates within porphyrin-containing compound metabolism; protoporphyrin-IX biosynthesis; coproporphyrinogen-III from 5-aminolevulinate: step 4/4. In terms of biological role, catalyzes the decarboxylation of four acetate groups of uroporphyrinogen-III to yield coproporphyrinogen-III. The protein is Uroporphyrinogen decarboxylase of Shewanella oneidensis (strain ATCC 700550 / JCM 31522 / CIP 106686 / LMG 19005 / NCIMB 14063 / MR-1).